A 413-amino-acid polypeptide reads, in one-letter code: Arginine biosynthesis bifunctional protein ArgJ (413 aa).

The substrate site is built by threonine 160, lysine 186, threonine 197, glutamate 277, asparagine 408, and threonine 413. The Nucleophile role is filled by threonine 197.

This sequence belongs to the ArgJ family. Heterotetramer of two alpha and two beta chains.

It is found in the cytoplasm. It carries out the reaction N(2)-acetyl-L-ornithine + L-glutamate = N-acetyl-L-glutamate + L-ornithine. The catalysed reaction is L-glutamate + acetyl-CoA = N-acetyl-L-glutamate + CoA + H(+). It functions in the pathway amino-acid biosynthesis; L-arginine biosynthesis; L-ornithine and N-acetyl-L-glutamate from L-glutamate and N(2)-acetyl-L-ornithine (cyclic): step 1/1. It participates in amino-acid biosynthesis; L-arginine biosynthesis; N(2)-acetyl-L-ornithine from L-glutamate: step 1/4. Its function is as follows. Catalyzes two activities which are involved in the cyclic version of arginine biosynthesis: the synthesis of N-acetylglutamate from glutamate and acetyl-CoA as the acetyl donor, and of ornithine by transacetylation between N(2)-acetylornithine and glutamate. The protein is Arginine biosynthesis bifunctional protein ArgJ of Prochlorococcus marinus (strain SARG / CCMP1375 / SS120).